The primary structure comprises 136 residues: Large ribosomal subunit protein uL16 (136 aa).

It belongs to the universal ribosomal protein uL16 family. In terms of assembly, part of the 50S ribosomal subunit.

In terms of biological role, binds 23S rRNA and is also seen to make contacts with the A and possibly P site tRNAs. The protein is Large ribosomal subunit protein uL16 of Rickettsia felis (strain ATCC VR-1525 / URRWXCal2) (Rickettsia azadi).